The sequence spans 171 residues: MQDTITNILNKYDLTGKYLDNNALTQITTYLNTALQRLEVVEIIQSQSSKIIKEAAARMYSEQPELLRPGGNSYTTRKYAMCLRDIEYYLRYATYAIIAGNNDILNERVLDGLKDTYNSLNVPIAPTVRSIQIMEEIIHNEISKQDLKIIKKSIISEPFDHMIQNLSEQDI.

Residue N72 is modified to N4-methylasparagine. Residue C82 participates in (2R,3E)-phycocyanobilin binding.

This sequence belongs to the phycobiliprotein family. In terms of assembly, heterodimer of an alpha and a beta chain. In terms of processing, contains one covalently linked bilin chromophore.

Its subcellular location is the plastid. It localises to the chloroplast thylakoid membrane. Its function is as follows. Light-harvesting photosynthetic bile pigment-protein from the phycobiliprotein complex. Allophycocyanin has a maximum absorption at approximately 650 nanometers. This is Allophycocyanin subunit beta-18 (apcF) from Aglaothamnion neglectum (Red alga).